Reading from the N-terminus, the 901-residue chain is Protein translocase subunit SecA (901 aa).

ATP is bound by residues Gln87, 105–109 (GEGKT), and Asp512. Residues 859 to 901 (HQDDDSAAAAALAAQTGERKVGRNDPCPCGSGKKYKQCHGRLQ) form a disordered region. 4 residues coordinate Zn(2+): Cys885, Cys887, Cys896, and His897. Residues 891-901 (KKYKQCHGRLQ) show a composition bias toward basic residues.

The protein belongs to the SecA family. As to quaternary structure, monomer and homodimer. Part of the essential Sec protein translocation apparatus which comprises SecA, SecYEG and auxiliary proteins SecDF-YajC and YidC. The cofactor is Zn(2+).

It localises to the cell inner membrane. Its subcellular location is the cytoplasm. It carries out the reaction ATP + H2O + cellular proteinSide 1 = ADP + phosphate + cellular proteinSide 2.. In terms of biological role, part of the Sec protein translocase complex. Interacts with the SecYEG preprotein conducting channel. Has a central role in coupling the hydrolysis of ATP to the transfer of proteins into and across the cell membrane, serving both as a receptor for the preprotein-SecB complex and as an ATP-driven molecular motor driving the stepwise translocation of polypeptide chains across the membrane. The sequence is that of Protein translocase subunit SecA from Escherichia coli O127:H6 (strain E2348/69 / EPEC).